The primary structure comprises 128 residues: Gas vesicle protein O (128 aa).

The tract at residues 1–49 (MANTPEDTQNTQNDSQNDSQNDSQKDTSARATSARAHQQPQEQPPSPMR) is disordered. Residues 7 to 22 (DTQNTQNDSQNDSQND) show a composition bias toward low complexity. Residues 29–41 (ARATSARAHQQPQ) are compositionally biased toward polar residues.

This sequence belongs to the gas vesicle GvpO family.

The protein resides in the gas vesicle. Functionally, a minor component of the gas vesicle. May play a role in transcription and/or RNA stability and in GV assembly. Gas vesicles are hollow, gas filled proteinaceous nanostructures found in some microorganisms. It is not clear what function gas vesicles perform in soil bacteria. This Streptomyces sp. (strain CB03234) protein is Gas vesicle protein O.